The following is a 93-amino-acid chain: Pyrimidine/purine nucleoside phosphorylase (93 aa).

The protein belongs to the nucleoside phosphorylase PpnP family.

It carries out the reaction a purine D-ribonucleoside + phosphate = a purine nucleobase + alpha-D-ribose 1-phosphate. It catalyses the reaction adenosine + phosphate = alpha-D-ribose 1-phosphate + adenine. The enzyme catalyses cytidine + phosphate = cytosine + alpha-D-ribose 1-phosphate. The catalysed reaction is guanosine + phosphate = alpha-D-ribose 1-phosphate + guanine. It carries out the reaction inosine + phosphate = alpha-D-ribose 1-phosphate + hypoxanthine. It catalyses the reaction thymidine + phosphate = 2-deoxy-alpha-D-ribose 1-phosphate + thymine. The enzyme catalyses uridine + phosphate = alpha-D-ribose 1-phosphate + uracil. The catalysed reaction is xanthosine + phosphate = alpha-D-ribose 1-phosphate + xanthine. Functionally, catalyzes the phosphorolysis of diverse nucleosides, yielding D-ribose 1-phosphate and the respective free bases. Can use uridine, adenosine, guanosine, cytidine, thymidine, inosine and xanthosine as substrates. Also catalyzes the reverse reactions. In Hahella chejuensis (strain KCTC 2396), this protein is Pyrimidine/purine nucleoside phosphorylase.